A 453-amino-acid polypeptide reads, in one-letter code: tRNA modification GTPase MnmE (453 aa).

(6S)-5-formyl-5,6,7,8-tetrahydrofolate is bound by residues Arg22, Glu79, and Lys119. The TrmE-type G domain maps to 215-376; sequence GMKVVIAGRP…LKQHLKSLMG (162 aa). Asn225 contributes to the K(+) binding site. GTP contacts are provided by residues 225-230, 244-250, 269-272, and 334-337; these read NAGKSS, TEIAGTT, DTAG, and NKAD. Ser229 contributes to the Mg(2+) binding site. K(+) contacts are provided by Thr244, Ile246, and Thr249. Thr250 contributes to the Mg(2+) binding site. A (6S)-5-formyl-5,6,7,8-tetrahydrofolate-binding site is contributed by Lys453.

It belongs to the TRAFAC class TrmE-Era-EngA-EngB-Septin-like GTPase superfamily. TrmE GTPase family. Homodimer. Heterotetramer of two MnmE and two MnmG subunits. K(+) is required as a cofactor.

Its subcellular location is the cytoplasm. Its function is as follows. Exhibits a very high intrinsic GTPase hydrolysis rate. Involved in the addition of a carboxymethylaminomethyl (cmnm) group at the wobble position (U34) of certain tRNAs, forming tRNA-cmnm(5)s(2)U34. The polypeptide is tRNA modification GTPase MnmE (Shewanella oneidensis (strain ATCC 700550 / JCM 31522 / CIP 106686 / LMG 19005 / NCIMB 14063 / MR-1)).